The primary structure comprises 383 residues: Queuine tRNA-ribosyltransferase (383 aa).

The Proton acceptor role is filled by aspartate 95. Residues 95 to 99 (DSGGF), aspartate 149, glutamine 195, and glycine 222 contribute to the substrate site. Residues 253-259 (GVGSPDS) are RNA binding. The active-site Nucleophile is aspartate 272. The interval 277 to 281 (TRIAR) is RNA binding; important for wobble base 34 recognition. Zn(2+)-binding residues include cysteine 310, cysteine 312, cysteine 315, and histidine 341.

This sequence belongs to the queuine tRNA-ribosyltransferase family. Homodimer. Within each dimer, one monomer is responsible for RNA recognition and catalysis, while the other monomer binds to the replacement base PreQ1. The cofactor is Zn(2+).

It catalyses the reaction 7-aminomethyl-7-carbaguanine + guanosine(34) in tRNA = 7-aminomethyl-7-carbaguanosine(34) in tRNA + guanine. Its pathway is tRNA modification; tRNA-queuosine biosynthesis. Functionally, catalyzes the base-exchange of a guanine (G) residue with the queuine precursor 7-aminomethyl-7-deazaguanine (PreQ1) at position 34 (anticodon wobble position) in tRNAs with GU(N) anticodons (tRNA-Asp, -Asn, -His and -Tyr). Catalysis occurs through a double-displacement mechanism. The nucleophile active site attacks the C1' of nucleotide 34 to detach the guanine base from the RNA, forming a covalent enzyme-RNA intermediate. The proton acceptor active site deprotonates the incoming PreQ1, allowing a nucleophilic attack on the C1' of the ribose to form the product. After dissociation, two additional enzymatic reactions on the tRNA convert PreQ1 to queuine (Q), resulting in the hypermodified nucleoside queuosine (7-(((4,5-cis-dihydroxy-2-cyclopenten-1-yl)amino)methyl)-7-deazaguanosine). The protein is Queuine tRNA-ribosyltransferase of Shouchella clausii (strain KSM-K16) (Alkalihalobacillus clausii).